The following is a 544-amino-acid chain: Shootin-1 (544 aa).

Coiled coils occupy residues 17–100 (SNQV…LKRK), 141–184 (IVIT…EKHD), and 259–349 (EALQ…QVSN). The segment at 343–544 (KLQQVSNPPT…TTTICTEQLS (202 aa)) is disordered. A compositionally biased stretch (pro residues) spans 352 to 371 (TAAPAPPPPPPPPPPPPPPS). Over residues 372–383 (SSSSNPLSSLLS) the composition is skewed to low complexity. The span at 397 to 412 (LVEKDSSEKSPEKDVR) shows a compositional bias: basic and acidic residues. The segment covering 469 to 479 (SSSPGPRPPSP) has biased composition (pro residues). The stretch at 480–504 (SEKSELEKALQRRREAVKSAKNNTN) forms a coiled coil. Residues 481–497 (EKSELEKALQRRREAVK) are compositionally biased toward basic and acidic residues. Positions 499–544 (AKNNTNPSSVVDLTQIKQTRSEPGQNTGDQETLRHTTTTICTEQLS) are enriched in polar residues.

This sequence belongs to the shootin family.

It is found in the perikaryon. The protein localises to the cell projection. Its subcellular location is the axon. It localises to the growth cone. The protein resides in the cytoplasm. It is found in the cytoskeleton. The protein localises to the filopodium. Its subcellular location is the lamellipodium. Involved in the generation of internal asymmetric signals required for neuronal polarization and neurite outgrowth. The protein is Shootin-1 of Danio rerio (Zebrafish).